Reading from the N-terminus, the 417-residue chain is Chaperone SurA (417 aa).

Positions 1 to 12 are cleaved as a signal peptide; it reads MGAALLCSFAHA. PpiC domains lie at 163-264 and 273-372; these read SEEY…KLEE and RDEV…QVLG.

The protein resides in the periplasm. It carries out the reaction [protein]-peptidylproline (omega=180) = [protein]-peptidylproline (omega=0). In terms of biological role, chaperone involved in the correct folding and assembly of outer membrane proteins. Recognizes specific patterns of aromatic residues and the orientation of their side chains, which are found more frequently in integral outer membrane proteins. May act in both early periplasmic and late outer membrane-associated steps of protein maturation. The chain is Chaperone SurA from Pseudomonas aeruginosa (strain ATCC 15692 / DSM 22644 / CIP 104116 / JCM 14847 / LMG 12228 / 1C / PRS 101 / PAO1).